The sequence spans 336 residues: MPMTGFYETISPRDQQRPPIWFLRQVGRYIPQYQELKRNRSLKDFFLDTESIVEATLLGPSLLGVDAAIVFADILSILEGFSVDYRFAPGPEVSYSPHEPLIFTKDPQETFSFLLEAIQQLTKRLTVPLIAFAASPFTLASYLIEGGASRDYPKTIAFLYQYPDRFKALLDEITLGTATYLQMQVQAGAAAIQLFESSSLRLPPHLFAKYVVAPNTKLIRQIKQTGNPPISLFCRCFYQEFLSLYAIGADTLHPDYHVELPEVYRQIHSPGSIQGNFDPALLLLPQDALIAHLEAYLAPLKQQSHYIFNLGHGILPQTPIENVQAVVSCLTSISTS.

Substrate is bound by residues 24 to 28 (RQVGR), Asp73, Tyr142, Ser197, and His312.

It belongs to the uroporphyrinogen decarboxylase family. As to quaternary structure, homodimer.

The protein localises to the cytoplasm. It catalyses the reaction uroporphyrinogen III + 4 H(+) = coproporphyrinogen III + 4 CO2. Its pathway is porphyrin-containing compound metabolism; protoporphyrin-IX biosynthesis; coproporphyrinogen-III from 5-aminolevulinate: step 4/4. Catalyzes the decarboxylation of four acetate groups of uroporphyrinogen-III to yield coproporphyrinogen-III. This is Uroporphyrinogen decarboxylase from Chlamydia trachomatis serovar L2 (strain ATCC VR-902B / DSM 19102 / 434/Bu).